The primary structure comprises 477 residues: MSPQTETKTSVGFKAGVKDYKLTYYTPDYKTKDTDILAAFRVTPQPGVPPEEAGXXVAAESSTGTWTTVWTDGLTSLDRYKGRCYGIEPVPGEETQFIAYVAYPLDLFEEXXVTNMFTSIVGNVFGFKALRALRLEDLRIPTAYVKTFQGPXHGIQVERDKLNKYGRPLLGCTIKPKLGLSAKNYGRAVYECLRGGLDFTKDDENVNSQPFMRWRDRFIFCAEAIYKAQAETGEIKGHYLNATAGTCEDMMKRAVFARELGVPIVMHDYLTGGFTANTTLAHYCRDNGLLLHIHRAMHAVIDRQKNHGMHFRVLAKALRMSGGDHIHSGTVVGKLEGEREITLGFVDLLRDDFIEKDRSRGIYFTQDWVSLPGVLPVASGGIHVWHMPALTEIFGDDSVLQFGGGTLGHPWGNAPGAVANRVALEACVQARNEGRDLATEGNEIIREATKWSPELAAACEVWKEIKFEFEAMDTLDV.

The propeptide occupies 1-2; sequence MS. At P3 the chain carries N-acetylproline. K14 is subject to N6,N6,N6-trimethyllysine. Residues N123 and T173 each coordinate substrate. Residue K175 is the Proton acceptor of the active site. Residue K177 participates in substrate binding. 3 residues coordinate Mg(2+): K201, D203, and E204. K201 is subject to N6-carboxylysine. Catalysis depends on H294, which acts as the Proton acceptor. R295, H327, and S379 together coordinate substrate.

It belongs to the RuBisCO large chain family. Type I subfamily. As to quaternary structure, heterohexadecamer of 8 large chains and 8 small chains; disulfide-linked. The disulfide link is formed within the large subunit homodimers. The cofactor is Mg(2+). In terms of processing, the disulfide bond which can form in the large chain dimeric partners within the hexadecamer appears to be associated with oxidative stress and protein turnover.

Its subcellular location is the plastid. It is found in the chloroplast. It carries out the reaction 2 (2R)-3-phosphoglycerate + 2 H(+) = D-ribulose 1,5-bisphosphate + CO2 + H2O. It catalyses the reaction D-ribulose 1,5-bisphosphate + O2 = 2-phosphoglycolate + (2R)-3-phosphoglycerate + 2 H(+). Functionally, ruBisCO catalyzes two reactions: the carboxylation of D-ribulose 1,5-bisphosphate, the primary event in carbon dioxide fixation, as well as the oxidative fragmentation of the pentose substrate in the photorespiration process. Both reactions occur simultaneously and in competition at the same active site. In Carthamus tinctorius (Safflower), this protein is Ribulose bisphosphate carboxylase large chain.